The chain runs to 369 residues: MLKLLLSPRSFLVLQLLLLRAGWSSKVLMSSANEDIKADLILTSTAPEHLSAPTLPLPEVQCFVFNIEYMNCTWNSSSEPQATNLTLHYRYKVSDNNTFQECSHYLFSKEITSGCQIQKEDIQLYQTFVVQLQDPQKPQRRAVQKLNLQNLVIPRAPENLTLSNLSESQLELRWKSRHIKERCLQYLVQYRSNRDRSWTELIVNHEPRFSLPSVDELKRYTFRVRSRYNPICGSSQQWSKWSQPVHWGSHTVEENPSLFALEAVLIPVGTMGLIITLIFVYCWLERMPPIPPIKNLEDLVTEYQGNFSAWSGVSKGLTESLQPDYSERFCHVSEIPPKGGALGEGPGGSPCSLHSPYWPPPCYSLKPEA.

A signal peptide spans 1 to 22; that stretch reads MLKLLLSPRSFLVLQLLLLRAG. Over 23–263 the chain is Extracellular; the sequence is WSSKVLMSSA…ENPSLFALEA (241 aa). A disulfide bridge connects residues Cys62 and Cys72. 4 N-linked (GlcNAc...) asparagine glycosylation sites follow: Asn71, Asn75, Asn84, and Asn96. Cys102 and Cys115 are oxidised to a cystine. Residues 156–254 enclose the Fibronectin type-III domain; sequence APENLTLSNL…VHWGSHTVEE (99 aa). 2 N-linked (GlcNAc...) asparagine glycosylation sites follow: Asn159 and Asn164. The WSXWS motif motif lies at 238–242; the sequence is WSKWS. Residues 264–284 form a helical membrane-spanning segment; sequence VLIPVGTMGLIITLIFVYCWL. Over 285–369 the chain is Cytoplasmic; that stretch reads ERMPPIPPIK…PPCYSLKPEA (85 aa). Positions 286–294 match the Box 1 motif motif; sequence RMPPIPPIK.

The protein belongs to the type I cytokine receptor family. Type 5 subfamily. The gamma subunit is common to the IL2, IL4, IL7, IL15, IL21 and probably also the IL13 receptors. Interacts with SHB upon interleukin stimulation. Interacts with IL9.

The protein localises to the cell membrane. It localises to the cell surface. Its function is as follows. Common subunit for the receptors for a variety of interleukins. Probably in association with IL15RA, involved in the stimulation of neutrophil phagocytosis by IL15. The polypeptide is Cytokine receptor common subunit gamma (Il2rg) (Mus musculus (Mouse)).